A 438-amino-acid polypeptide reads, in one-letter code: MADYQGKNVVIIGLGLTGLSCVDFFLARGVTPRVMDTRMTPPGLDKLPEAVERHTGSLNDEWLMAADLIVASPGIALAHPSLSAAADAGIEIVGDIELFCREAQAPIVAITGSNGKSTVTTLVGEMAKAAGVNVGVGGNIGLPALMLLDDECELYVLELSSFQLETTSSLQAVAATILNVTEDHMDRYPFGLQQYRAAKLRIYENAKVCVVNADDALTMPIRGADERCVSFGVNMGDYHLNHQQGETWLRVKGEKVLNVKEMKLSGQHNYTNALAALALADAAGLPRASSLKALTTFTGLPHRFEVVLEHNGVRWINDSKATNVGSTEAALNGLHVDGTLHLLLGGDGKSADFSPLARYLNGDNVRLYCFGRDGAQLAALRPEVAEQTETMEQAMRLLAPRVQPGDMVLLSPACASLDQFKNFEQRGNEFARLAKELG.

Position 112–118 (112–118 (GSNGKST)) interacts with ATP.

It belongs to the MurCDEF family. It depends on Mg(2+) as a cofactor.

The protein resides in the cytoplasm. The enzyme catalyses UDP-N-acetyl-alpha-D-muramoyl-L-alanine + D-glutamate + ATP = UDP-N-acetyl-alpha-D-muramoyl-L-alanyl-D-glutamate + ADP + phosphate + H(+). It functions in the pathway cell wall biogenesis; peptidoglycan biosynthesis. Functionally, cell wall formation. Catalyzes the addition of glutamate to the nucleotide precursor UDP-N-acetylmuramoyl-L-alanine (UMA). This chain is UDP-N-acetylmuramoylalanine--D-glutamate ligase (murD), found in Escherichia coli (strain K12).